The chain runs to 278 residues: Small ribosomal subunit protein uS3 (278 aa).

In terms of domain architecture, KH type-2 spans 38 to 106 (IRKLLATGLE…QVQLNILEVK (69 aa)). The disordered stretch occupies residues 215-278 (AAAAPAGADR…AAGQPETTES (64 aa)). Positions 238–278 (SGASGTTATSTDAGRAATEEAPATDAAATAPAAGQPETTES) are enriched in low complexity.

Belongs to the universal ribosomal protein uS3 family. As to quaternary structure, part of the 30S ribosomal subunit. Forms a tight complex with proteins S10 and S14.

In terms of biological role, binds the lower part of the 30S subunit head. Binds mRNA in the 70S ribosome, positioning it for translation. The sequence is that of Small ribosomal subunit protein uS3 from Mycolicibacterium gilvum (strain PYR-GCK) (Mycobacterium gilvum (strain PYR-GCK)).